The chain runs to 242 residues: Guanylate kinase (242 aa).

Residues 22-200 (GLLIVMTGAS…AVRELQAVQR (179 aa)) form the Guanylate kinase-like domain. 29 to 36 (GASGVGKG) is a binding site for ATP.

Belongs to the guanylate kinase family.

It localises to the cytoplasm. The catalysed reaction is GMP + ATP = GDP + ADP. Its function is as follows. Essential for recycling GMP and indirectly, cGMP. This is Guanylate kinase from Deinococcus geothermalis (strain DSM 11300 / CIP 105573 / AG-3a).